The sequence spans 532 residues: Light-independent protochlorophyllide reductase subunit B (532 aa).

D36 serves as a coordination point for [4Fe-4S] cluster. Catalysis depends on D292, which acts as the Proton donor. Position 428 to 429 (428 to 429 (GL)) interacts with substrate. The disordered stretch occupies residues 445-486 (EEEEPESISNGHAAAAGSEGGVPDSGEAGDAGDTDGMPWSPD).

It belongs to the ChlB/BchB/BchZ family. In terms of assembly, protochlorophyllide reductase is composed of three subunits; BchL, BchN and BchB. Forms a heterotetramer of two BchB and two BchN subunits. The cofactor is [4Fe-4S] cluster.

It carries out the reaction chlorophyllide a + oxidized 2[4Fe-4S]-[ferredoxin] + 2 ADP + 2 phosphate = protochlorophyllide a + reduced 2[4Fe-4S]-[ferredoxin] + 2 ATP + 2 H2O. The protein operates within porphyrin-containing compound metabolism; bacteriochlorophyll biosynthesis (light-independent). Component of the dark-operative protochlorophyllide reductase (DPOR) that uses Mg-ATP and reduced ferredoxin to reduce ring D of protochlorophyllide (Pchlide) to form chlorophyllide a (Chlide). This reaction is light-independent. The NB-protein (BchN-BchB) is the catalytic component of the complex. In Chlorobium phaeobacteroides (strain BS1), this protein is Light-independent protochlorophyllide reductase subunit B.